The chain runs to 246 residues: Small ribosomal subunit protein uS2 (246 aa).

It belongs to the universal ribosomal protein uS2 family.

The protein is Small ribosomal subunit protein uS2 of Saccharophagus degradans (strain 2-40 / ATCC 43961 / DSM 17024).